The following is a 745-amino-acid chain: Myeloperoxidase (745 aa).

The signal sequence occupies residues 1 to 48 (MGVPFFSSLRCMVDLGPCWAGGLTAEMKLLLALAGLLAILATPQPSEG). Asn139 is a glycosylation site (N-linked (GlcNAc...) asparagine). A disulfide bridge links Cys167 with Cys180. Asp260 serves as a coordination point for heme b. His261 (proton acceptor) is an active-site residue. Ca(2+) is bound at residue Asp262. 2 disulfides stabilise this stretch: Cys281–Cys291 and Cys285–Cys309. Cys316 is modified (cysteine sulfenic acid (-SOH)). N-linked (GlcNAc...) asparagine glycosylation is present at Asn323. Ca(2+) contacts are provided by Thr334, Phe336, Asp338, and Ser340. Asn355 and Asn391 each carry an N-linked (GlcNAc...) asparagine glycan. Cys387 and Cys398 are joined by a disulfide. Glu408 and Met409 together coordinate heme b. Asn483 carries N-linked (GlcNAc...) asparagine glycosylation. Residue His502 participates in heme b binding. Disulfide bonds link Cys606–Cys663 and Cys704–Cys730. Asn729 is a glycosylation site (N-linked (GlcNAc...) asparagine).

The protein belongs to the peroxidase family. XPO subfamily. In terms of assembly, homodimer; disulfide-linked. Each monomer consists of a light and a heavy chain. Found in a complex with CP and LTF; interacts directly with CP, which protects CP antioxidant properties by MPO. Ca(2+) serves as cofactor. Heme b is required as a cofactor.

It is found in the lysosome. The catalysed reaction is chloride + H2O2 + H(+) = hypochlorous acid + H2O. Part of the host defense system of polymorphonuclear leukocytes. It is responsible for microbicidal activity against a wide range of organisms. In the stimulated PMN, MPO catalyzes the production of hypohalous acids, primarily hypochlorous acid in physiologic situations, and other toxic intermediates that greatly enhance PMN microbicidal activity. Mediates the proteolytic cleavage of alpha-1-microglobulin to form t-alpha-1-microglobulin, which potently inhibits oxidation of low-density lipoprotein particles and limits vascular damage. The polypeptide is Myeloperoxidase (Homo sapiens (Human)).